The sequence spans 204 residues: Photosynthetic NDH subunit of subcomplex B 3, chloroplastic (204 aa).

2 disordered regions span residues Met-1–Lys-24 and Lys-45–Pro-68. Residues Met-1–Arg-48 constitute a chloroplast transit peptide. Residues His-76–Leu-180 form the 2Fe-2S ferredoxin-type domain. 4 residues coordinate [2Fe-2S] cluster: Cys-120, Cys-126, Cys-129, and Cys-162.

Part of the chloroplast NDH complex, composed of a mixture of chloroplast and nucleus encoded subunits. Component of the NDH subcomplex B, at least composed of PnsB1, PnsB2, PnsB3, PnsB4 and PnsB5.

The protein resides in the plastid. It is found in the chloroplast thylakoid membrane. Functionally, NDH shuttles electrons from NAD(P)H:plastoquinone, via FMN and iron-sulfur (Fe-S) centers, to quinones in the photosynthetic chain and possibly in a chloroplast respiratory chain. The immediate electron acceptor for the enzyme in this species is believed to be plastoquinone. Couples the redox reaction to proton translocation, and thus conserves the redox energy in a proton gradient. This chain is Photosynthetic NDH subunit of subcomplex B 3, chloroplastic, found in Arabidopsis thaliana (Mouse-ear cress).